Here is a 105-residue protein sequence, read N- to C-terminus: Small ribosomal subunit protein uS10 (105 aa).

This sequence belongs to the universal ribosomal protein uS10 family. Part of the 30S ribosomal subunit.

In terms of biological role, involved in the binding of tRNA to the ribosomes. This chain is Small ribosomal subunit protein uS10, found in Bdellovibrio bacteriovorus (strain ATCC 15356 / DSM 50701 / NCIMB 9529 / HD100).